The chain runs to 92 residues: Movement protein (92 aa).

The helical transmembrane segment at 38 to 58 threads the bilayer; that stretch reads VIALVVILVSVGVFYLAYTLF.

The protein belongs to the mastrevirus movement protein family. Interacts with the capsid protein (CP). Part of a MP-CP-viral DNA complex.

It is found in the host membrane. In terms of biological role, involved in the viral transport within, and between cells. This chain is Movement protein, found in Phaseolus vulgaris (Kidney bean).